Consider the following 430-residue polypeptide: L-lysine N6-monooxygenase MbtG (430 aa).

The signal sequence occupies residues 1 to 21 (MTATLAVIGAGPKAVAVAAKA).

Belongs to the lysine N(6)-hydroxylase/L-ornithine N(5)-oxygenase family. Requires FAD as cofactor.

It carries out the reaction L-lysine + NADPH + O2 = N(6)-hydroxy-L-lysine + NADP(+) + H2O. The protein operates within siderophore biosynthesis; mycobactin biosynthesis. Functionally, flavoprotein monooxygenase required for N-hydroxylation of the two acylated lysine residues during mycobactin assembly, thus producing the hydroxamate groups necessary for iron sequestration. Is also able, but less efficiently, to hydroxylate L-lysine (non acylated) in vitro. The polypeptide is L-lysine N6-monooxygenase MbtG (mbtG) (Mycobacterium sp. (strain MCS)).